The following is a 218-amino-acid chain: Elongation factor Ts (218 aa).

The segment at 82 to 85 is involved in Mg(2+) ion dislocation from EF-Tu; it reads TDFV.

This sequence belongs to the EF-Ts family.

The protein resides in the cytoplasm. Associates with the EF-Tu.GDP complex and induces the exchange of GDP to GTP. It remains bound to the aminoacyl-tRNA.EF-Tu.GTP complex up to the GTP hydrolysis stage on the ribosome. The sequence is that of Elongation factor Ts from Prochlorococcus marinus (strain NATL1A).